Consider the following 180-residue polypeptide: Ribulose bisphosphate carboxylase small subunit 1A, chloroplastic (180 aa).

The transit peptide at 1-54 (MASSMLSSATMVASPAQATMVAPFNGLKSSAAFPATRKANNDITSITSNGGRVN) directs the protein to the chloroplast. Ser113 is modified (phosphoserine).

It belongs to the RuBisCO small chain family. Heterohexadecamer of 8 large and 8 small subunits.

Its subcellular location is the plastid. The protein resides in the chloroplast membrane. It localises to the chloroplast stroma. In terms of biological role, ruBisCO catalyzes two reactions: the carboxylation of D-ribulose 1,5-bisphosphate, the primary event in carbon dioxide fixation, as well as the oxidative fragmentation of the pentose substrate. Both reactions occur simultaneously and in competition at the same active site. Although the small subunit is not catalytic it is essential for maximal activity. The chain is Ribulose bisphosphate carboxylase small subunit 1A, chloroplastic (RBCS-1A) from Arabidopsis thaliana (Mouse-ear cress).